The primary structure comprises 353 residues: MPSSRTCVGVVFGGASEEHAVSIRSAITVVGALRSEVNNNRFEVIAIYIDQRGRWWPAGVAEAVLKQGQPAKPEQLSTPLAPQGFTKLPEGSERVQVWYPVLHGPNGEDGTVQGLFTLMGQPFVGSGVLGSALSMDKLAMKAAFAAAGLPQVPYFAVDAADLLDTESRQGVAKNLEAKLKYPCFVKPANLGSSVGISKAQNRNELLIGLDKAASLDRRIVVEQGVSARELECAVLGKRELQTSVVGEICFDADWYDYDTKYSENCSHTLIPAPLPEGVEAQIRTLALQACRCVAAHGMARVDFFYNAARNEIWLNEINTLPGFTSQSMYPMLWEASGVTLEELVSQLVITAGE.

One can recognise an ATP-grasp domain in the interval 141 to 349; the sequence is KAAFAAAGLP…LEELVSQLVI (209 aa). Residue 176 to 231 coordinates ATP; that stretch reads EAKLKYPCFVKPANLGSSVGISKAQNRNELLIGLDKAASLDRRIVVEQGVSARELE. Mg(2+) contacts are provided by D302, E316, and N318.

This sequence belongs to the D-alanine--D-alanine ligase family. Mg(2+) serves as cofactor. Requires Mn(2+) as cofactor.

It is found in the cytoplasm. The catalysed reaction is 2 D-alanine + ATP = D-alanyl-D-alanine + ADP + phosphate + H(+). It functions in the pathway cell wall biogenesis; peptidoglycan biosynthesis. Functionally, cell wall formation. The protein is D-alanine--D-alanine ligase of Prochlorococcus marinus (strain MIT 9303).